A 130-amino-acid chain; its full sequence is Small ribosomal subunit protein uS11 (130 aa).

Belongs to the universal ribosomal protein uS11 family. In terms of assembly, part of the 30S ribosomal subunit. Interacts with proteins S7 and S18. Binds to IF-3.

In terms of biological role, located on the platform of the 30S subunit, it bridges several disparate RNA helices of the 16S rRNA. Forms part of the Shine-Dalgarno cleft in the 70S ribosome. This chain is Small ribosomal subunit protein uS11, found in Caldicellulosiruptor bescii (strain ATCC BAA-1888 / DSM 6725 / KCTC 15123 / Z-1320) (Anaerocellum thermophilum).